The primary structure comprises 105 residues: Phosphoribosyl-ATP pyrophosphatase (105 aa).

This sequence belongs to the PRA-PH family.

The protein resides in the cytoplasm. It catalyses the reaction 1-(5-phospho-beta-D-ribosyl)-ATP + H2O = 1-(5-phospho-beta-D-ribosyl)-5'-AMP + diphosphate + H(+). The protein operates within amino-acid biosynthesis; L-histidine biosynthesis; L-histidine from 5-phospho-alpha-D-ribose 1-diphosphate: step 2/9. The polypeptide is Phosphoribosyl-ATP pyrophosphatase (Roseobacter denitrificans (strain ATCC 33942 / OCh 114) (Erythrobacter sp. (strain OCh 114))).